Consider the following 409-residue polypeptide: uncharacterized protein (409 aa).

Positions Met-1–Ser-209 constitute an EAL domain. The HDOD domain maps to Leu-203–Tyr-392.

This is an uncharacterized protein from Bacillus subtilis (strain 168).